Reading from the N-terminus, the 1289-residue chain is MNILKHFPSYVGPSKIRTLVIPIGHWTRKEFNNAVQKLSEFNEIHLSDVTPIDSPIFTPQGFPHGKLFFDFLTIDHDDALELFLYDFEPFRKTFVIIGLVNDYSDPLTNLNFMKEKYPTLISPNLVYASSTPTKELEQTIDTMENVFASSPDMQKNIETIMCDIARNFLTALNSYYSSYKHVTLRSPGAIGGNAVLKTTLIRQNSYTSSSSSTPMSAVQSSVSSSSKAGSVTTASKRLSSFEMTTNSLKRSASLKLATTLSTSENRSQQKSLGRQMKILGNFQLLAGRYVDALNSFVDAITTLYKVRDYLWLGSALDGISICFLLLSYLGLSYQIPQIVSLICPVEKLNFESSSTGISPVDSNSKATASTTASSTPRNSISIAAMQSPRNSIMSLSAPALNIDVENINLPLLIKCISDKVLYYYDLSLMHNSEYAPQVVYCEFLLKTLTFMTSCYKSSEFSKDVLDNIVKNQHRALSDIPNSPMFPRFEVYFYSNKLFELQLKEMQVEAQIKIYSTMAEVYRLLGYKRKQLFVLRLLMVALLATPNKIAWHPDYRTLIDTIIELLNINESEAKINVDDPSQSTWLILQKKILQLCIKVSRKINDFEYVAKFSSILITKYTHLLNQSEQDALFKEYIQPSITNESITSYWDPFILREVVINRILDSDPTSNEIPLESDVSSLESLENRQKTQDINPQEVFNPFKRVQPTSFVSNNSTKVPILVFLVGDKAEFTCRVQNPFKFDFTINDIQLDEEISEFCEIDRKAVSYSGPYNVKAESIRSITLPLIIKKPTYKKIYEISCLKISILKLPLQKFDIINDSRRSNPVEEEAEYSKCIYGKLKIKILPEQPQLELLSTSKMTRNSWMMLDGTKTDFHITVRNKSLSCAINHIKIIPMNNIEQMLKPDYWKKMPPDDLYIMEKQLDWLSKSCVRIIKLPTVIKPNETITFDLELDNTAVPFNFTGFDLLIEYGMSATDESCIYLKKLSIPYEVTLRRTIEVPSMDIIPLNELFSSQVENVDWIEYVMSKIRAESNLHSRDFILLLLDFRNSWIDGIKLNVQFEDFTSNEYHVEASHTSRIIVPIKKIDYKKYNFENTPIPRIYPGRQFIQSGLNEEQTIEMRQKFWCREHIISKLKCNWKLTTDQSVTGSVDFNKFIEKFDHKMVYTIYPGRLFYGVQLLLDEPKVKVGEIINLKIITEPTSTCRRKQNSTVNFLDIVIFDSKTSKILPRSNRRILYNGSLTKPISTTKVSEINLEIIPIEKGRYEFSVCISKSNNQDGIIQFDSENVILSVI.

A compositionally biased stretch (polar residues) spans 354–365 (STGISPVDSNSK). The segment at 354–374 (STGISPVDSNSKATASTTASS) is disordered. Phosphoserine occurs at positions 379 and 387.

The protein belongs to the TRS120 family. In terms of assembly, part of the multisubunit TRAPP (transport protein particle) II complex composed of BET3, BET5, TRS20, TRS23, TRS31, TRS33, TRS65, TRS120 and TRS130. Interacts directly with TRS65.

The protein resides in the golgi apparatus. The protein localises to the cis-Golgi network. In terms of biological role, specific subunit of the TRAPP II complex, a highly conserved vesicle tethering complex that functions in the late Golgi as a guanine nucleotide exchanger (GEF) for the Golgi YPT1 GTPase. TRS120 plays a role in the YPT GEF activity of TRAPP II in concert with the two other TRAPP II-specific subunits TRS65 and TRS130. The polypeptide is Trafficking protein particle complex II-specific subunit 120 (TRS120) (Saccharomyces cerevisiae (strain ATCC 204508 / S288c) (Baker's yeast)).